The primary structure comprises 245 residues: Ribonuclease 3 (245 aa).

The RNase III domain occupies 17 to 146 (FAKKMNELGF…FVGALYLDQG (130 aa)). E59 is a binding site for Mg(2+). D63 is an active-site residue. Residues D132 and E135 each coordinate Mg(2+). E135 is an active-site residue. Positions 172-241 (DFKTQFQEYV…AESAYSKLKS (70 aa)) constitute a DRBM domain. Residues 217-245 (ATGQGKTKKESEQKAAESAYSKLKSNNNL) form a disordered region.

Belongs to the ribonuclease III family. Homodimer. Mg(2+) serves as cofactor.

The protein localises to the cytoplasm. It carries out the reaction Endonucleolytic cleavage to 5'-phosphomonoester.. In terms of biological role, digests double-stranded RNA. Involved in the processing of primary rRNA transcript to yield the immediate precursors to the large and small rRNAs (23S and 16S). Processes some mRNAs, and tRNAs when they are encoded in the rRNA operon. Processes pre-crRNA and tracrRNA of type II CRISPR loci if present in the organism. This chain is Ribonuclease 3, found in Staphylococcus haemolyticus (strain JCSC1435).